The following is a 271-amino-acid chain: Tryptophan synthase alpha chain (271 aa).

Residues E49 and D60 each act as proton acceptor in the active site.

The protein belongs to the TrpA family. In terms of assembly, tetramer of two alpha and two beta chains.

It carries out the reaction (1S,2R)-1-C-(indol-3-yl)glycerol 3-phosphate + L-serine = D-glyceraldehyde 3-phosphate + L-tryptophan + H2O. Its pathway is amino-acid biosynthesis; L-tryptophan biosynthesis; L-tryptophan from chorismate: step 5/5. The alpha subunit is responsible for the aldol cleavage of indoleglycerol phosphate to indole and glyceraldehyde 3-phosphate. The polypeptide is Tryptophan synthase alpha chain (Paraburkholderia phymatum (strain DSM 17167 / CIP 108236 / LMG 21445 / STM815) (Burkholderia phymatum)).